The primary structure comprises 44 residues: Cytochrome b559 subunit beta (44 aa).

A helical membrane pass occupies residues Trp19–Ala35. Heme is bound at residue His23.

The protein belongs to the PsbE/PsbF family. Heterodimer of an alpha subunit and a beta subunit. PSII is composed of 1 copy each of membrane proteins PsbA, PsbB, PsbC, PsbD, PsbE, PsbF, PsbH, PsbI, PsbJ, PsbK, PsbL, PsbM, PsbT, PsbX, PsbY, PsbZ, Psb30/Ycf12, peripheral proteins PsbO, CyanoQ (PsbQ), PsbU, PsbV and a large number of cofactors. It forms dimeric complexes. Requires heme b as cofactor.

The protein localises to the cellular thylakoid membrane. Its function is as follows. This b-type cytochrome is tightly associated with the reaction center of photosystem II (PSII). PSII is a light-driven water:plastoquinone oxidoreductase that uses light energy to abstract electrons from H(2)O, generating O(2) and a proton gradient subsequently used for ATP formation. It consists of a core antenna complex that captures photons, and an electron transfer chain that converts photonic excitation into a charge separation. In Gloeothece citriformis (strain PCC 7424) (Cyanothece sp. (strain PCC 7424)), this protein is Cytochrome b559 subunit beta.